Here is a 354-residue protein sequence, read N- to C-terminus: 3-dehydroquinate synthase (354 aa).

Residues 69-74, 103-107, 127-128, lysine 140, and lysine 149 each bind NAD(+); these read DGEAEK, GVIGD, and TS. Residues glutamate 182, histidine 245, and histidine 262 each contribute to the Zn(2+) site.

This sequence belongs to the sugar phosphate cyclases superfamily. Dehydroquinate synthase family. Co(2+) is required as a cofactor. Requires Zn(2+) as cofactor. It depends on NAD(+) as a cofactor.

It is found in the cytoplasm. It catalyses the reaction 7-phospho-2-dehydro-3-deoxy-D-arabino-heptonate = 3-dehydroquinate + phosphate. It functions in the pathway metabolic intermediate biosynthesis; chorismate biosynthesis; chorismate from D-erythrose 4-phosphate and phosphoenolpyruvate: step 2/7. Functionally, catalyzes the conversion of 3-deoxy-D-arabino-heptulosonate 7-phosphate (DAHP) to dehydroquinate (DHQ). The protein is 3-dehydroquinate synthase of Colwellia psychrerythraea (strain 34H / ATCC BAA-681) (Vibrio psychroerythus).